The following is a 211-amino-acid chain: Small ribosomal subunit protein eS1 (211 aa).

Belongs to the eukaryotic ribosomal protein eS1 family.

This is Small ribosomal subunit protein eS1 from Methanothrix thermoacetophila (strain DSM 6194 / JCM 14653 / NBRC 101360 / PT) (Methanosaeta thermophila).